A 118-amino-acid polypeptide reads, in one-letter code: Large ribosomal subunit protein uL18 (118 aa).

Belongs to the universal ribosomal protein uL18 family. Part of the 50S ribosomal subunit; part of the 5S rRNA/L5/L18/L25 subcomplex. Contacts the 5S and 23S rRNAs.

Its function is as follows. This is one of the proteins that bind and probably mediate the attachment of the 5S RNA into the large ribosomal subunit, where it forms part of the central protuberance. In Campylobacter jejuni subsp. jejuni serotype O:6 (strain 81116 / NCTC 11828), this protein is Large ribosomal subunit protein uL18.